A 70-amino-acid polypeptide reads, in one-letter code: MKRQKRDMYARAFKRGYLAGVSGKSKDSCPIEQAEVRQEWLNGWREGRTDQWEGMTGVSGIHKLANVTTA.

It belongs to the ribosome modulation factor family.

It localises to the cytoplasm. In terms of biological role, during stationary phase, converts 70S ribosomes to an inactive dimeric form (100S ribosomes). This is Ribosome modulation factor from Marinobacter adhaerens (strain DSM 23420 / HP15).